A 184-amino-acid chain; its full sequence is DOMON domain-containing protein CBG21755 (184 aa).

Residues 1–20 (MIVPISLLFLFLSFVPFSYS) form the signal peptide. The 118-residue stretch at 28–145 (EVASMSWMVK…CVNWIVVPGG (118 aa)) folds into the DOMON domain. N49 carries an N-linked (GlcNAc...) asparagine glycan.

The protein resides in the secreted. The polypeptide is DOMON domain-containing protein CBG21755 (Caenorhabditis briggsae).